We begin with the raw amino-acid sequence, 95 residues long: Large ribosomal subunit protein uL23 (95 aa).

This sequence belongs to the universal ribosomal protein uL23 family. As to quaternary structure, part of the 50S ribosomal subunit. Contacts protein L29, and trigger factor when it is bound to the ribosome.

Functionally, one of the early assembly proteins it binds 23S rRNA. One of the proteins that surrounds the polypeptide exit tunnel on the outside of the ribosome. Forms the main docking site for trigger factor binding to the ribosome. The chain is Large ribosomal subunit protein uL23 from Bacillus subtilis (strain 168).